The sequence spans 81 residues: Styelin-E (81 aa).

Positions 1–22 (MQMKATILIVLVALFMIQQSEA) are cleaved as a signal peptide. Residue tryptophan 24 is modified to 6'-bromotryptophan. The residue at position 26 (arginine 26) is a 3,4-dihydroxyarginine. Lysine 27, lysine 30, and lysine 34 each carry 4,5-dihydroxylysine. 3',4'-dihydroxyphenylalanine is present on residues tyrosine 36 and tyrosine 37. Lysine 38 is modified (4,5-dihydroxylysine). 5-hydroxylysine is present on lysine 40. 3',4'-dihydroxyphenylalanine is present on residues tyrosine 41 and tyrosine 42. Residue lysine 44 is modified to 5-hydroxylysine. At leucine 54 the chain carries Leucine amide. The propeptide at 56 to 81 (DMTDEEFQDFMKEVEQAREEELQSRQ) is removed in mature form.

Contains L-DOPA (3',4'-dihydroxyphenylalanine). Hemocytes and pharyngeal tissues.

It localises to the secreted. Functionally, bactericidal against several Gram-positive and Gram-negative bacteria. This Styela clava (Sea squirt) protein is Styelin-E.